Consider the following 312-residue polypeptide: tRNA uridine(34) hydroxylase (312 aa).

The 96-residue stretch at 130–225 (RGDDVVFFDG…YGEKYGNDGL (96 aa)) folds into the Rhodanese domain. The active-site Cysteine persulfide intermediate is the Cys-185.

Belongs to the TrhO family.

The catalysed reaction is uridine(34) in tRNA + AH2 + O2 = 5-hydroxyuridine(34) in tRNA + A + H2O. Its function is as follows. Catalyzes oxygen-dependent 5-hydroxyuridine (ho5U) modification at position 34 in tRNAs. The sequence is that of tRNA uridine(34) hydroxylase from Corynebacterium diphtheriae (strain ATCC 700971 / NCTC 13129 / Biotype gravis).